Here is a 61-residue protein sequence, read N- to C-terminus: Conotoxin TeAr154 (61 aa).

The first 19 residues, M1–S19, serve as a signal peptide directing secretion. Positions V20 to L47 are excised as a propeptide. At E57 the chain carries 4-carboxyglutamate.

Post-translationally, contains 2 disulfide bonds that can be either 'C1-C3, C2-C4' or 'C1-C4, C2-C3', since these disulfide connectivities have been observed for conotoxins with cysteine framework V (for examples, see AC P0DQQ7 and AC P81755). In terms of processing, contains 2 disulfide bonds. As to expression, expressed by the venom duct.

The protein localises to the secreted. The protein is Conotoxin TeAr154 of Conus textile (Cloth-of-gold cone).